Consider the following 88-residue polypeptide: Large ribosomal subunit protein bL31B (88 aa).

This sequence belongs to the bacterial ribosomal protein bL31 family. Type B subfamily. In terms of assembly, part of the 50S ribosomal subunit.

This chain is Large ribosomal subunit protein bL31B, found in Herminiimonas arsenicoxydans.